The chain runs to 139 residues: Endoribonuclease YbeY (139 aa).

His99, His103, and His109 together coordinate Zn(2+).

This sequence belongs to the endoribonuclease YbeY family. The cofactor is Zn(2+).

The protein localises to the cytoplasm. Its function is as follows. Single strand-specific metallo-endoribonuclease involved in late-stage 70S ribosome quality control and in maturation of the 3' terminus of the 16S rRNA. The polypeptide is Endoribonuclease YbeY (Sulfurimonas denitrificans (strain ATCC 33889 / DSM 1251) (Thiomicrospira denitrificans (strain ATCC 33889 / DSM 1251))).